Consider the following 1139-residue polypeptide: Protein lin-25 (1139 aa).

Residues 695 to 701 carry the Nuclear localization signal motif; sequence IKKKKDP.

As to expression, expressed in seam cells and all six vulva precursor cells (VPC). After VPC division, expression is restricted to descendants of the VPC cell lineages P5.p, P6.p and P7.p (at protein level).

It is found in the nucleus. Its subcellular location is the cytoplasm. Functionally, participates in the inductive signaling pathway downstream of let-60 Ras and the RAF/MAP kinase cascade to regulate specification and differentiation of many cell types. Positively regulates the fate of vulval precursor cells. Required for induction of the P12 and excretory duct cell fates. In males, it is also required for proper formation of spicules. Does not function in the signaling pathway that promotes exit from pachytene. Plays a role in responses to M.nematophilum-mediated bacterial infection by promoting tail swelling and preventing constipation. The polypeptide is Protein lin-25 (lin-25) (Caenorhabditis elegans).